We begin with the raw amino-acid sequence, 479 residues long: UPF0164 protein TP_0865 (479 aa).

A signal peptide spans 1–49 (MVRMRRRRACSSGGACGCAAVRGARSFLSVRVLGMRIGMSALCLAPLFA).

It belongs to the UPF0164 family.

This chain is UPF0164 protein TP_0865, found in Treponema pallidum (strain Nichols).